A 24-amino-acid polypeptide reads, in one-letter code: MFFSSKKCKTVXKTFRGPCVRNAN.

It belongs to the DEFL family. Group IV subfamily. In terms of tissue distribution, distributed in the epidermal cell layer of leaves and in the subepidermal layer region of stems. Not in roots.

Its subcellular location is the secreted. The protein resides in the cell wall. Functionally, antimicrobial peptide. Active against Fusarium spp., Gram-positive and Gram-negative bacterial pathogens. This Spinacia oleracea (Spinach) protein is Defensin D5.